Here is a 426-residue protein sequence, read N- to C-terminus: Histidine--tRNA ligase (426 aa).

It belongs to the class-II aminoacyl-tRNA synthetase family. Homodimer.

It localises to the cytoplasm. It catalyses the reaction tRNA(His) + L-histidine + ATP = L-histidyl-tRNA(His) + AMP + diphosphate + H(+). This is Histidine--tRNA ligase from Picosynechococcus sp. (strain ATCC 27264 / PCC 7002 / PR-6) (Agmenellum quadruplicatum).